We begin with the raw amino-acid sequence, 89 residues long: Acylphosphatase (89 aa).

In terms of domain architecture, Acylphosphatase-like spans 3-89; it reads QKHLQVFGTV…SEDFSDFKSI (87 aa). Residues arginine 18 and asparagine 36 contribute to the active site.

The protein belongs to the acylphosphatase family.

The enzyme catalyses an acyl phosphate + H2O = a carboxylate + phosphate + H(+). In Staphylococcus haemolyticus (strain JCSC1435), this protein is Acylphosphatase (acyP).